Here is a 165-residue protein sequence, read N- to C-terminus: Crossover junction endodeoxyribonuclease RuvC (165 aa).

Catalysis depends on residues D7, E67, and D140. Mg(2+)-binding residues include D7, E67, and D140.

Belongs to the RuvC family. As to quaternary structure, homodimer which binds Holliday junction (HJ) DNA. The HJ becomes 2-fold symmetrical on binding to RuvC with unstacked arms; it has a different conformation from HJ DNA in complex with RuvA. In the full resolvosome a probable DNA-RuvA(4)-RuvB(12)-RuvC(2) complex forms which resolves the HJ. Requires Mg(2+) as cofactor.

It localises to the cytoplasm. The enzyme catalyses Endonucleolytic cleavage at a junction such as a reciprocal single-stranded crossover between two homologous DNA duplexes (Holliday junction).. The RuvA-RuvB-RuvC complex processes Holliday junction (HJ) DNA during genetic recombination and DNA repair. Endonuclease that resolves HJ intermediates. Cleaves cruciform DNA by making single-stranded nicks across the HJ at symmetrical positions within the homologous arms, yielding a 5'-phosphate and a 3'-hydroxyl group; requires a central core of homology in the junction. The consensus cleavage sequence is 5'-(A/T)TT(C/G)-3'. Cleavage occurs on the 3'-side of the TT dinucleotide at the point of strand exchange. HJ branch migration catalyzed by RuvA-RuvB allows RuvC to scan DNA until it finds its consensus sequence, where it cleaves and resolves the cruciform DNA. The protein is Crossover junction endodeoxyribonuclease RuvC of Dehalococcoides mccartyi (strain ATCC BAA-2266 / KCTC 15142 / 195) (Dehalococcoides ethenogenes (strain 195)).